Reading from the N-terminus, the 386-residue chain is 4-hydroxy-3-methylbut-2-en-1-yl diphosphate synthase (flavodoxin) (386 aa).

[4Fe-4S] cluster contacts are provided by Cys-289, Cys-292, Cys-324, and Glu-331.

The protein belongs to the IspG family. Requires [4Fe-4S] cluster as cofactor.

It carries out the reaction (2E)-4-hydroxy-3-methylbut-2-enyl diphosphate + oxidized [flavodoxin] + H2O + 2 H(+) = 2-C-methyl-D-erythritol 2,4-cyclic diphosphate + reduced [flavodoxin]. The protein operates within isoprenoid biosynthesis; isopentenyl diphosphate biosynthesis via DXP pathway; isopentenyl diphosphate from 1-deoxy-D-xylulose 5-phosphate: step 5/6. Functionally, converts 2C-methyl-D-erythritol 2,4-cyclodiphosphate (ME-2,4cPP) into 1-hydroxy-2-methyl-2-(E)-butenyl 4-diphosphate. This is 4-hydroxy-3-methylbut-2-en-1-yl diphosphate synthase (flavodoxin) from Nitratidesulfovibrio vulgaris (strain ATCC 29579 / DSM 644 / CCUG 34227 / NCIMB 8303 / VKM B-1760 / Hildenborough) (Desulfovibrio vulgaris).